A 192-amino-acid chain; its full sequence is I-Kappa-B like protein H1 (192 aa).

ANK repeat units follow at residues 94–126 (KGAQ…DING), 131–161 (AGLT…DVKV), and 165–192 (GKET…SKKM).

Belongs to the polydnaviridae I-Kappa-B-like protein family.

In terms of biological role, suppresses the host immune response through NF-kappa-B inactivation. Possesses ankyrin repeat domains required for NF-kappa-B binding but lacks the regulatory regions required for dissociation from NF-kappa-B and degradation. Therefore, prevents host NF-kappa-B release and subsequent activation. The polypeptide is I-Kappa-B like protein H1 (H4) (Microplitis demolitor bracovirus (isolate Webb) (MdBV)).